The primary structure comprises 486 residues: Cardiolipin synthase A (486 aa).

2 helical membrane-spanning segments follow: residues 3 to 23 (IFYNLIKCLIFSTYWLLIANI) and 38 to 58 (MSWLLTIYIIPFIGISIWFFF). 2 PLD phosphodiesterase domains span residues 219–246 (VDVRQHRKIILIDNYIAYSGSMNLVDPY) and 399–426 (QKGLLHSKSILVDQQLSLIGTVNLDMRS). Catalysis depends on residues H224, K226, D231, H404, K406, and D411.

This sequence belongs to the phospholipase D family. Cardiolipin synthase subfamily. ClsA sub-subfamily.

It localises to the cell inner membrane. The enzyme catalyses 2 a 1,2-diacyl-sn-glycero-3-phospho-(1'-sn-glycerol) = a cardiolipin + glycerol. In terms of biological role, catalyzes the reversible phosphatidyl group transfer from one phosphatidylglycerol molecule to another to form cardiolipin (CL) (diphosphatidylglycerol) and glycerol. The polypeptide is Cardiolipin synthase A (Buchnera aphidicola subsp. Acyrthosiphon pisum (strain 5A)).